The chain runs to 431 residues: Histidine--tRNA ligase (431 aa).

Belongs to the class-II aminoacyl-tRNA synthetase family. As to quaternary structure, homodimer.

It localises to the cytoplasm. The enzyme catalyses tRNA(His) + L-histidine + ATP = L-histidyl-tRNA(His) + AMP + diphosphate + H(+). The polypeptide is Histidine--tRNA ligase (Neisseria meningitidis serogroup B (strain ATCC BAA-335 / MC58)).